The sequence spans 94 residues: Selenoprotein K (94 aa).

The helical transmembrane segment at 20–42 threads the bilayer; it reads VSFLTDFFWGIAEFVVFFFKTLL. Positions 46–94 are disordered; it reads VKKRRGYGSSSDSRYDDGRGPPGNPPRRMGRISHLRGPSPPPMAGGUGR. A non-standard amino acid (selenocysteine) is located at residue U92.

It belongs to the selenoprotein K family. Interacts with DERL1, DERL2, DERL3 and SELENOS. The SELENOK-SELENOS complex interacts with VCP. Interacts with ZDHHC6. Post-translationally, cleaved by CAPN2/m-calpain in resting macrophages but not in activated macrophages. Macrophage activation up-regulates expression of the calpain inhibitor CAST/calpastatin, resulting in inhibition of CAPN2 activity. In terms of processing, truncated SELENOK proteins produced by failed UGA/Sec decoding are ubiquitinated by the CRL2(KLHDC2) complex, which recognizes the diglycine (Gly-Gly) at the C-terminus of truncated SELENOK proteins. High expression in spleen and intestine (at protein level). Expressed in a range of immune cells including T and B-cells and also in myeloid cells including macrophages, neutrophils and dendritic cells (at protein level).

The protein localises to the endoplasmic reticulum membrane. The protein resides in the cell membrane. Its function is as follows. Required for Ca(2+) flux in immune cells and plays a role in T-cell proliferation and in T-cell and neutrophil migration. Involved in endoplasmic reticulum-associated degradation (ERAD) of soluble glycosylated proteins. Required for palmitoylation and cell surface expression of CD36 and involved in macrophage uptake of low-density lipoprotein and in foam cell formation. Together with ZDHHC6, required for palmitoylation of ITPR1 in immune cells, leading to regulate ITPR1 stability and function. Plays a role in protection of cells from ER stress-induced apoptosis. Protects cells from oxidative stress when overexpressed in cardiomyocytes. The polypeptide is Selenoprotein K (Mus musculus (Mouse)).